A 490-amino-acid polypeptide reads, in one-letter code: Gram-negative bacteria-binding protein 3 (490 aa).

The N-terminal stretch at 1 to 25 is a signal peptide; sequence MADALRFVAWSCCLQLLFLLLGVQG. One can recognise a CBM39 domain in the interval 26–126; that stretch reads YEVPKAKIDV…GSFVVNGYSG (101 aa). Positions 162-490 constitute a GH16 domain; that stretch reads TEVNGAPTRC…KIDYVKVYSL (329 aa). 2 N-linked (GlcNAc...) asparagine glycosylation sites follow: Asn-362 and Asn-373.

Belongs to the insect beta-1,3-glucan binding protein family.

It localises to the secreted. In terms of biological role, involved in the recognition of invading microorganisms. Binds specifically to beta-1,3-glucan and activates the phenoloxidase cascade. The chain is Gram-negative bacteria-binding protein 3 from Drosophila melanogaster (Fruit fly).